Here is a 60-residue protein sequence, read N- to C-terminus: Pepsin-3 (60 aa).

A propeptide spans 1–35 (INVPLTRHKSMRESLREKGIELPYQDPAIKYRPEF) (activation peptide).

Belongs to the peptidase A1 family.

In Thunnus orientalis (North Pacific bluefin tuna), this protein is Pepsin-3.